The sequence spans 271 residues: MPRLAFLLRPGWLALALVVVAFTYLCFTVLAPWQLGKNAKTSRENQQIRYSLDTPPVPLKTLLPQQDSSAPDAQWRRVTATGQYLPDVQVLARLRVVEGDQAFEVLAPFVVDGGPTVLVDRGYVRPQVGSHVPPIPRLPVQTVTITARLRDSEPSVAGKDPFVRDGFQQVYSINTGQVAALTGVQLAGSYLQLIEDQPGGLGVLGVPHLDPGPFLSYGIQWISFGILAPIGLGYFAYAEIRARRREKAGSPPPDKPMTVEQKLADRYGRRR.

The next 3 helical transmembrane spans lie at 11-33 (GWLA…LAPW), 172-194 (SINT…LQLI), and 214-236 (FLSY…GYFA). Residues 245–271 (REKAGSPPPDKPMTVEQKLADRYGRRR) form a disordered region. A compositionally biased stretch (basic and acidic residues) spans 262–271 (KLADRYGRRR).

This sequence belongs to the SURF1 family.

It localises to the cell membrane. This is an uncharacterized protein from Mycobacterium tuberculosis (strain CDC 1551 / Oshkosh).